The following is a 149-amino-acid chain: MADQLTEEQIAEFKEAFSLFDKDGDGTITTKELGTVMRSLGQNPTEAELQDMINEVDADGNGTIDFPEFLSLMARKMKDTDTEEELIEAFKVFDRDGNGFISAAELRHVMTNLGEKLTDEEVDEMIREADVDGDGQINYEEFVKMMMAK.

N-acetylalanine is present on alanine 2. 4 EF-hand domains span residues 8–43 (EQIA…LGQN), 44–79 (PTEA…KMKD), 81–116 (DTEE…LGEK), and 117–149 (LTDE…MMAK). Positions 21, 23, 25, 27, 32, 57, 59, 61, 63, 68, 94, 96, 98, and 105 each coordinate Ca(2+). Lysine 116 carries the N6,N6,N6-trimethyllysine modification. Ca(2+)-binding residues include aspartate 130, aspartate 132, aspartate 134, glutamine 136, and glutamate 141.

It belongs to the calmodulin family.

In terms of biological role, calmodulin mediates the control of a large number of enzymes, ion channels and other proteins by Ca(2+). Among the enzymes to be stimulated by the calmodulin-Ca(2+) complex are a number of protein kinases and phosphatases. The protein is Calmodulin of Karlodinium veneficum (Dinoflagellate).